Here is a 74-residue protein sequence, read N- to C-terminus: MKVPIVLMLVLLLIMPLSDGYERKRXXXVECNETCEEFCTYCDDNNAEETENCRTDQTDHSRCVDFYTANNLPT.

Positions 1–20 (MKVPIVLMLVLLLIMPLSDG) are cleaved as a signal peptide. A propeptide spanning residues 21-28 (YERKRXXX) is cleaved from the precursor.

Belongs to the conopeptide P-like superfamily. Post-translationally, contains 3 disulfide bonds. As to expression, expressed by the venom duct.

The protein resides in the secreted. Its function is as follows. Acts as a neurotoxin by inhibiting an ion channel. This chain is Turripeptide OL135, found in Iotyrris olangoensis (Sea snail).